Reading from the N-terminus, the 253-residue chain is ATP synthase subunit b 2 (253 aa).

Residues 9–27 traverse the membrane as a helical segment; that stretch reads VLEIVNFLVLVWLLKRFLY.

It belongs to the ATPase B chain family. In terms of assembly, F-type ATPases have 2 components, F(1) - the catalytic core - and F(0) - the membrane proton channel. F(1) has five subunits: alpha(3), beta(3), gamma(1), delta(1), epsilon(1). F(0) has three main subunits: a(1), b(2) and c(10-14). The alpha and beta chains form an alternating ring which encloses part of the gamma chain. F(1) is attached to F(0) by a central stalk formed by the gamma and epsilon chains, while a peripheral stalk is formed by the delta and b chains.

The protein resides in the cell inner membrane. F(1)F(0) ATP synthase produces ATP from ADP in the presence of a proton or sodium gradient. F-type ATPases consist of two structural domains, F(1) containing the extramembraneous catalytic core and F(0) containing the membrane proton channel, linked together by a central stalk and a peripheral stalk. During catalysis, ATP synthesis in the catalytic domain of F(1) is coupled via a rotary mechanism of the central stalk subunits to proton translocation. In terms of biological role, component of the F(0) channel, it forms part of the peripheral stalk, linking F(1) to F(0). This is ATP synthase subunit b 2 from Methylococcus capsulatus (strain ATCC 33009 / NCIMB 11132 / Bath).